Reading from the N-terminus, the 339-residue chain is uncharacterized protein (339 aa).

28 to 35 (GPINSGKT) contributes to the ATP binding site.

Belongs to the archaeal ATPase family.

This is an uncharacterized protein from Pyrococcus abyssi (strain GE5 / Orsay).